A 456-amino-acid polypeptide reads, in one-letter code: Potassium voltage-gated channel subfamily A member 7 (456 aa).

The helical transmembrane segment at 144–164 threads the bilayer; it reads VLAVVSVLVILVSIVVFCLET. Asn-191 is a glycosylation site (N-linked (GlcNAc...) asparagine). Residues 209–229 form a helical membrane-spanning segment; it reads FFVVETLCICWFSFELLVRLL. Cys-231 carries the S-palmitoyl cysteine lipid modification. The chain crosses the membrane as a helical span at residues 241-261; that stretch reads VMNLIDFVAILPYFVALGTEL. The chain crosses the membrane as a helical; Voltage-sensor span at residues 276 to 295; the sequence is ILRVIRLVRVFRIFKLSRHS. Residues 312 to 332 form a helical membrane-spanning segment; sequence LGLLIFFLFIGVVLFSSAVYF. The short motif at 358 to 363 is the Selectivity filter element; sequence TVGYGD. A helical membrane pass occupies residues 373-393; it reads IVGSLCAIAGVLTISLPVPVI.

The protein belongs to the potassium channel family. A (Shaker) (TC 1.A.1.2) subfamily. Kv1.7/KCNA7 sub-subfamily. In terms of assembly, heterotetramer of potassium channel proteins. Highly expressed in skeletal muscle, heart and kidney.

It localises to the membrane. It carries out the reaction K(+)(in) = K(+)(out). Mediates the voltage-dependent potassium ion permeability of excitable membranes. Assuming opened or closed conformations in response to the voltage difference across the membrane, the protein forms a potassium-selective channel through which potassium ions may pass in accordance with their electrochemical gradient. The sequence is that of Potassium voltage-gated channel subfamily A member 7 (KCNA7) from Homo sapiens (Human).